Here is a 382-residue protein sequence, read N- to C-terminus: Chaperone protein DnaJ 2 (382 aa).

The J domain maps to 4-68 (DYYGLLGVSK…DKRRIVDLGG (65 aa)). The CR-type zinc-finger motif lies at 132–214 (GVTKQVTVDT…CMGDGRIRAR (83 aa)). The Zn(2+) site is built by C145, C148, C162, C165, C188, C191, C202, and C205. 4 CXXCXGXG motif repeats span residues 145 to 152 (CDRCQGKG), 162 to 169 (CDTCGGRG), 188 to 195 (CPTCRGVG), and 202 to 209 (CQQCMGDG).

The protein belongs to the DnaJ family. Homodimer. Interacts with RNase J. Zn(2+) is required as a cofactor.

The protein resides in the cytoplasm. Functionally, participates actively in the response to hyperosmotic and heat shock by preventing the aggregation of stress-denatured proteins and by disaggregating proteins, also in an autonomous, DnaK-independent fashion. Unfolded proteins bind initially to DnaJ; upon interaction with the DnaJ-bound protein, DnaK hydrolyzes its bound ATP, resulting in the formation of a stable complex. GrpE releases ADP from DnaK; ATP binding to DnaK triggers the release of the substrate protein, thus completing the reaction cycle. Several rounds of ATP-dependent interactions between DnaJ, DnaK and GrpE are required for fully efficient folding. Also involved, together with DnaK and GrpE, in the DNA replication of plasmids through activation of initiation proteins. Inhibits the beta-lactamase and RNase activity of RNase J. The polypeptide is Chaperone protein DnaJ 2 (Mycobacterium tuberculosis (strain ATCC 25618 / H37Rv)).